We begin with the raw amino-acid sequence, 113 residues long: Pro-FMRFamide-related neuropeptide FF (113 aa).

The N-terminal stretch at Met-1–Cys-20 is a signal peptide. The propeptide occupies Ala-21–Arg-65. Residues Glu-22 to Thr-48 form a disordered region. At Phe-76 the chain carries Phenylalanine amide. Residues Asn-79–Arg-92 constitute a propeptide that is removed on maturation. Phe-110 carries the post-translational modification Phenylalanine amide.

This sequence belongs to the FARP (FMRFamide related peptide) family.

The protein localises to the secreted. Its function is as follows. Morphine modulating peptides. Have wide-ranging physiologic effects, including the modulation of morphine-induced analgesia, elevation of arterial blood pressure, and increased somatostatin secretion from the pancreas. Neuropeptide FF potentiates and sensitizes ASIC1 and ASIC3 channels. In Homo sapiens (Human), this protein is Pro-FMRFamide-related neuropeptide FF.